The sequence spans 519 residues: Aldehyde dehydrogenase X, mitochondrial (519 aa).

The N-terminal 19 residues, 1-19, are a transit peptide targeting the mitochondrion; that stretch reads MLNARFLVPRLLCLQGRTT. An N6-acetyllysine modification is found at K53. K54 carries the N6-acetyllysine; alternate modification. Residue K54 is modified to N6-succinyllysine; alternate. An NAD(+)-binding site is contributed by 264–269; the sequence is GSTEVG. Catalysis depends on E287, which acts as the Proton acceptor. The active-site Nucleophile is C321. N6-acetyllysine; alternate is present on residues K366, K385, K401, and K428. An N6-succinyllysine; alternate mark is found at K366, K385, K401, and K428. K431 is subject to N6-acetyllysine.

The protein belongs to the aldehyde dehydrogenase family. In terms of assembly, homotetramer.

It localises to the mitochondrion matrix. The enzyme catalyses an aldehyde + NAD(+) + H2O = a carboxylate + NADH + 2 H(+). It functions in the pathway alcohol metabolism; ethanol degradation; acetate from ethanol: step 2/2. In terms of biological role, ALDHs play a major role in the detoxification of alcohol-derived acetaldehyde. They are involved in the metabolism of corticosteroids, biogenic amines, neurotransmitters, and lipid peroxidation. In Rattus norvegicus (Rat), this protein is Aldehyde dehydrogenase X, mitochondrial (Aldh1b1).